The primary structure comprises 445 residues: Mitochondrial enolase superfamily member 1 (445 aa).

Substrate contacts are provided by residues 24 to 26 (GSD), Y34, and K220. The active-site Proton donor/acceptor is K222. A Mg(2+)-binding site is contributed by D250. Residues N252, E276, E305, 355 to 357 (HAG), and E386 each bind substrate. 2 residues coordinate Mg(2+): E276 and E305. Residue H355 is part of the active site.

Belongs to the mandelate racemase/muconate lactonizing enzyme family. ENOSF1 subfamily. It depends on Mg(2+) as a cofactor.

Its subcellular location is the mitochondrion. The catalysed reaction is L-fuconate = 2-dehydro-3-deoxy-L-fuconate + H2O. Its function is as follows. Plays a role in the catabolism of L-fucose, a sugar that is part of the carbohydrates that are attached to cellular glycoproteins. Catalyzes the dehydration of L-fuconate to 2-keto-3-deoxy-L-fuconate by the abstraction of the 2-proton to generate an enediolate intermediate that is stabilized by the magnesium ion. May down-regulate thymidylate synthase activity, possibly already at the RNA level, by promoting the degradation of TYMS mRNA via an antisense RNA-based mechanism. The protein is Mitochondrial enolase superfamily member 1 (enosf1) of Xenopus laevis (African clawed frog).